Here is a 1939-residue protein sequence, read N- to C-terminus: Myosin-1 (1939 aa).

Positions 33-82 (DAKTSVFVAEPKESFVKGTVQSREGGKVTVKTEAGATLTVKEDQVFPMNP) constitute a Myosin N-terminal SH3-like domain. Residues Thr64 and Thr69 each carry the phosphothreonine modification. The Myosin motor domain occupies 86-782 (DKIEDMAMMT…LLGLLEEMRD (697 aa)). An N6,N6,N6-trimethyllysine modification is found at Lys130. ATP is bound at residue 179–186 (GESGAGKT). Tyr389 carries the post-translational modification Phosphotyrosine. Thr419 carries the phosphothreonine modification. At Tyr424 the chain carries Phosphotyrosine. The tract at residues 659–681 (LNKLMTNLRSTHPHFVRCIIPNE) is actin-binding. His757 is subject to Pros-methylhistidine. Residues 761 to 775 (KFGHTKVFFKAGLLG) form an actin-binding region. The region spanning 785–814 (LAQLITRTQARCRGFLARVEYQKMVERRES) is the IQ domain. Residues 843–1939 (LLKSAETEKE…EVHTKIISEE (1097 aa)) adopt a coiled-coil conformation. Residues Ser1092 and Ser1096 each carry the phosphoserine modification. Disordered stretches follow at residues 1125–1147 (EIEA…SREL) and 1153–1172 (RLEE…KKRE). Positions 1128-1147 (AERASRAKAEKQRSDLSREL) are enriched in basic and acidic residues. Phosphoserine occurs at positions 1162 and 1237. Thr1241 carries the post-translational modification Phosphothreonine. Ser1243 bears the Phosphoserine mark. Thr1255 carries the phosphothreonine modification. The residue at position 1261 (Ser1261) is a Phosphoserine. Residues Thr1265 and Thr1286 each carry the phosphothreonine modification. Residues Ser1288, Ser1292, Ser1303, and Ser1306 each carry the phosphoserine modification. Tyr1464 is modified (phosphotyrosine). Residue Thr1467 is modified to Phosphothreonine. Ser1474 is modified (phosphoserine). Tyr1492 carries the phosphotyrosine modification. Ser1495 is subject to Phosphoserine. Residue Thr1501 is modified to Phosphothreonine. Phosphoserine is present on Ser1514. At Thr1517 the chain carries Phosphothreonine. 7 positions are modified to phosphoserine: Ser1542, Ser1554, Ser1574, Ser1600, Ser1603, Ser1714, and Ser1726. 2 positions are modified to phosphothreonine: Thr1730 and Thr1736. At Ser1739 the chain carries Phosphoserine.

This sequence belongs to the TRAFAC class myosin-kinesin ATPase superfamily. Myosin family. In terms of assembly, muscle myosin is a hexameric protein that consists of 2 heavy chain subunits (MHC), 2 alkali light chain subunits (MLC) and 2 regulatory light chain subunits (MLC-2). Interacts with SLC26A5.

It localises to the cytoplasm. The protein resides in the myofibril. Required for normal hearing. It plays a role in cochlear amplification of auditory stimuli, likely through the positive regulation of prestin (SLC26A5) activity and outer hair cell (OHC) electromotility. This is Myosin-1 (MYH1) from Sus scrofa (Pig).